A 374-amino-acid chain; its full sequence is Phospho-2-dehydro-3-deoxyheptonate aldolase AMT16 (374 aa).

It belongs to the class-I DAHP synthase family.

The enzyme catalyses D-erythrose 4-phosphate + phosphoenolpyruvate + H2O = 7-phospho-2-dehydro-3-deoxy-D-arabino-heptonate + phosphate. It participates in mycotoxin biosynthesis. Nonribosomal peptide synthetase; part of the gene clusters that mediate the biosynthesis of AM-toxins, host-selective toxins (HSTs) causing Alternaria blotch on apple, a worldwide distributed disease. AM-toxins are cyclic depsipeptides containing the 3 residues 2-hydroxy-isovaleric acid (2-HIV), dehydroalanine, L-alanine which are common for all 3 AM-toxins I to III. The fourth precursor is L-alpha-amino-methoxyphenyl-valeric acid (L-Amv) for AM-toxin I, L-alpha-amino-phenyl-valeric acid (L-Apv) for AM-toxin II, and L-alpha-amino-hydroxyphenyl-valeric acid (L-Ahv) for AM-toxin III. AM-toxins have two target sites for affecting susceptible apple cells; they cause invagination of the plasma membrane and electrolyte loss and chloroplast disorganization. The non-ribosomal peptide synthetase AMT1 contains 4 catalytic modules and is responsible for activation of each residue in AM-toxin. The aldo-keto reductase AMT2 catalyzes the conversion of 2-keto-isovaleric acid (2-KIV) to 2-hydroxy-isovaleric acid (2-HIV), one of the precursor residues incorporated by AMT1 during AM-toxin biosynthesis, by reduction of its ketone to an alcohol. The cytochrome P450 monooxygenase AMT3 and the thioesterase AMT4 are also important for AM-toxin production, but their exact function within the AM-toxin biosynthesis are not known yet. Up to 21 proteins (including AMT1 to AMT4) are predicted to be involved in AM-toxin biosynthesis since their expression ishighly up-regulated in AM-toxin-producing cultures. In Alternaria alternata (Alternaria rot fungus), this protein is Phospho-2-dehydro-3-deoxyheptonate aldolase AMT16.